Reading from the N-terminus, the 404-residue chain is Formate-dependent phosphoribosylglycinamide formyltransferase (404 aa).

Residues 25–26 (EL) and glutamate 85 contribute to the N(1)-(5-phospho-beta-D-ribosyl)glycinamide site. ATP-binding positions include arginine 118, lysine 159, 164 to 169 (SSGKGQ), 199 to 202 (EGFI), and glutamate 207. Positions 123 to 318 (RLAAEELGLP…EFELHARAIL (196 aa)) constitute an ATP-grasp domain. Mg(2+)-binding residues include glutamate 277 and glutamate 289. N(1)-(5-phospho-beta-D-ribosyl)glycinamide is bound by residues aspartate 296, lysine 365, and 372 to 373 (RR).

The protein belongs to the PurK/PurT family. As to quaternary structure, homodimer.

The catalysed reaction is N(1)-(5-phospho-beta-D-ribosyl)glycinamide + formate + ATP = N(2)-formyl-N(1)-(5-phospho-beta-D-ribosyl)glycinamide + ADP + phosphate + H(+). The protein operates within purine metabolism; IMP biosynthesis via de novo pathway; N(2)-formyl-N(1)-(5-phospho-D-ribosyl)glycinamide from N(1)-(5-phospho-D-ribosyl)glycinamide (formate route): step 1/1. Its function is as follows. Involved in the de novo purine biosynthesis. Catalyzes the transfer of formate to 5-phospho-ribosyl-glycinamide (GAR), producing 5-phospho-ribosyl-N-formylglycinamide (FGAR). Formate is provided by PurU via hydrolysis of 10-formyl-tetrahydrofolate. The polypeptide is Formate-dependent phosphoribosylglycinamide formyltransferase (Burkholderia mallei (strain NCTC 10247)).